Reading from the N-terminus, the 464-residue chain is MTHYDVVVLGAGPGGYVAAIRAAQLGLSTAIVEPKYWGGVCLNVGCIPSKALLRNAELVHIFTKDAKAFGISGEVTFDYGIAYDRSRKVAEGRVAGVHFLMKKNKITEIHGYGTFADANTLLVDLNDGGTESVTFDNAIIATGSSTRLVPGTSLSANVVTYEEQILSRELPKSIIIAGAGAIGMEFGYVLKNYGVDVTIVEFLPRALPNEDADVSKEIEKQFKKLGVTILTATKVESIADGGSQVTVTVTKDGVAQELKAEKVLQAIGFAPNVEGYGLDKAGVALTDRKAIGVDDYMRTNVGHIYAIGDVNGLLQLAHVAEAQGVVAAETIAGAETLTLGDHRMLPRATFCQPNVASFGLTEQQARNEGYDVVVAKFPFTANAKAHGVGDPSGFVKLVADAKHGELLGGHLVGHDVAELLPELTLAQRWDLTASELARNVHTHPTMSEALQECFHGLVGHMINF.

FAD contacts are provided by residues 33-41 (EPKYWGGVC), Lys-50, and Gly-113. Cys-41 and Cys-46 are disulfide-bonded. Residues 178–182 (GAGAI), Glu-201, and 266–269 (AIGF) contribute to the NAD(+) site. Residues Asp-309 and Ala-317 each contribute to the FAD site. Catalysis depends on His-443, which acts as the Proton acceptor.

The protein belongs to the class-I pyridine nucleotide-disulfide oxidoreductase family. Homodimer. Part of the PDH complex, consisting of multiple copies of AceE (E1), DlaT (E2) and Lpd (E3), and of the BCKADH complex, consisting of multiple copies of BkdA/BkdB (E1), BkdC (E2) and Lpd (E3). Requires FAD as cofactor.

It is found in the cytoplasm. The catalysed reaction is N(6)-[(R)-dihydrolipoyl]-L-lysyl-[protein] + NAD(+) = N(6)-[(R)-lipoyl]-L-lysyl-[protein] + NADH + H(+). Functionally, lipoamide dehydrogenase is a component of the alpha-ketoacid dehydrogenase complexes. Catalyzes the reoxidation of dihydrolipoyl groups which are covalently attached to the lipoate acyltransferase components (E2) of the complexes. The protein is Dihydrolipoyl dehydrogenase (lpd) of Mycobacterium bovis (strain ATCC BAA-935 / AF2122/97).